Consider the following 448-residue polypeptide: Homogentisate 1,2-dioxygenase (448 aa).

His-303 acts as the Proton acceptor in catalysis. Positions 346 and 352 each coordinate Fe cation. 2 residues coordinate homogentisate: Tyr-361 and His-382. His-382 contributes to the Fe cation binding site.

This sequence belongs to the homogentisate dioxygenase family. Hexamer; dimer of trimers. Fe cation serves as cofactor.

It catalyses the reaction homogentisate + O2 = 4-maleylacetoacetate + H(+). The protein operates within amino-acid degradation; L-phenylalanine degradation; acetoacetate and fumarate from L-phenylalanine: step 4/6. Its function is as follows. Involved in the catabolism of homogentisate (2,5-dihydroxyphenylacetate or 2,5-OH-PhAc), a central intermediate in the degradation of phenylalanine and tyrosine. Catalyzes the oxidative ring cleavage of the aromatic ring of homogentisate to yield maleylacetoacetate. The sequence is that of Homogentisate 1,2-dioxygenase from Nitrobacter hamburgensis (strain DSM 10229 / NCIMB 13809 / X14).